A 118-amino-acid polypeptide reads, in one-letter code: Secreted RxLR effector protein 143 (118 aa).

Positions M1 to S18 are cleaved as a signal peptide. A compositionally biased stretch (basic and acidic residues) spans D35–G65. The segment at D35 to I66 is disordered. The RxLR-dEER signature appears at R49–R64.

This sequence belongs to the RxLR effector family.

Its subcellular location is the secreted. The protein resides in the host cell membrane. Functionally, secreted effector that completely suppresses the host cell death induced by cell death-inducing proteins. In Plasmopara viticola (Downy mildew of grapevine), this protein is Secreted RxLR effector protein 143.